Consider the following 112-residue polypeptide: Small ribosomal subunit protein bS6 (112 aa).

The protein belongs to the bacterial ribosomal protein bS6 family.

Functionally, binds together with bS18 to 16S ribosomal RNA. The chain is Small ribosomal subunit protein bS6 from Azobacteroides pseudotrichonymphae genomovar. CFP2.